We begin with the raw amino-acid sequence, 208 residues long: UPF0637 protein BCG9842_B1177 (208 aa).

Belongs to the UPF0637 family.

This Bacillus cereus (strain G9842) protein is UPF0637 protein BCG9842_B1177.